Reading from the N-terminus, the 306-residue chain is Agmatinase (306 aa).

Mn(2+) contacts are provided by His-126, Asp-149, His-151, Asp-153, Asp-230, and Asp-232.

It belongs to the arginase family. Agmatinase subfamily. The cofactor is Mn(2+).

The enzyme catalyses agmatine + H2O = urea + putrescine. It functions in the pathway amine and polyamine biosynthesis; putrescine biosynthesis via agmatine pathway; putrescine from agmatine: step 1/1. Catalyzes the formation of putrescine from agmatine. The protein is Agmatinase of Salmonella dublin (strain CT_02021853).